The sequence spans 594 residues: Aspartate--tRNA(Asp/Asn) ligase (594 aa).

L-aspartate is bound at residue glutamate 175. The segment at 199 to 202 is aspartate; the sequence is QQFK. The L-aspartate site is built by arginine 221 and histidine 455. An ATP-binding site is contributed by 221–223; the sequence is RDE. An ATP-binding site is contributed by glutamate 488. An L-aspartate-binding site is contributed by arginine 495. Residue 540 to 543 coordinates ATP; sequence GIDR.

The protein belongs to the class-II aminoacyl-tRNA synthetase family. Type 1 subfamily. Homodimer.

It localises to the cytoplasm. The catalysed reaction is tRNA(Asx) + L-aspartate + ATP = L-aspartyl-tRNA(Asx) + AMP + diphosphate. Aspartyl-tRNA synthetase with relaxed tRNA specificity since it is able to aspartylate not only its cognate tRNA(Asp) but also tRNA(Asn). Reaction proceeds in two steps: L-aspartate is first activated by ATP to form Asp-AMP and then transferred to the acceptor end of tRNA(Asp/Asn). The chain is Aspartate--tRNA(Asp/Asn) ligase from Ruegeria sp. (strain TM1040) (Silicibacter sp.).